We begin with the raw amino-acid sequence, 197 residues long: Carnitine operon protein CaiE (197 aa).

The interval 177 to 197 (TAPEANRPRLRGTTEVKPKGQ) is disordered. The span at 188–197 (GTTEVKPKGQ) shows a compositional bias: basic and acidic residues.

The protein belongs to the transferase hexapeptide repeat family.

Its pathway is amine and polyamine metabolism; carnitine metabolism. In terms of biological role, overproduction of CaiE stimulates the activity of CaiB and CaiD. The polypeptide is Carnitine operon protein CaiE (Proteus sp. (strain LE138)).